A 325-amino-acid chain; its full sequence is UPF0285 protein MMP0642 (325 aa).

Belongs to the UPF0285 family.

The polypeptide is UPF0285 protein MMP0642 (Methanococcus maripaludis (strain DSM 14266 / JCM 13030 / NBRC 101832 / S2 / LL)).